A 292-amino-acid polypeptide reads, in one-letter code: MSERYPIIAITGSSGAGTTSVTRTFENIFCREGVKSVVIEGDSFHRYDRAEMKVKMAEAERTGNMNFSHFGAENNLFGDLESLFRSYAESGTGMRRRYLHSTEEAAPFGQQPGTFTAWEPLPADTDLLFYEGLHGGVVTDEVNVAQYPNLLIGVVPVINLEWIQKLWRDKKQRGYSTEAVTDTILRRMPDYVNYICPQFSRTHVNFQRVPCVDTSNPFISREIPAPDESMVVIRFANPKGIDFQYLLSMIHDSFMSRANTIVVPGGKMELAMQLIFTPFVLRMMERRKRAAL.

12–20 (GSSGAGTTS) contacts ATP.

Belongs to the phosphoribulokinase family. Homooctamer.

The catalysed reaction is D-ribulose 5-phosphate + ATP = D-ribulose 1,5-bisphosphate + ADP + H(+). It functions in the pathway carbohydrate biosynthesis; Calvin cycle. This chain is Phosphoribulokinase, plasmid (cfxP), found in Cupriavidus necator (strain ATCC 17699 / DSM 428 / KCTC 22496 / NCIMB 10442 / H16 / Stanier 337) (Ralstonia eutropha).